A 161-amino-acid polypeptide reads, in one-letter code: MELPAVNLKVILLVHWLLTTWGCLVFSSSYAWGNFTILALGVWAVAQRDSIDAIGMFLGGLVATIFLDIIYISIFYSSVATGDTGRFGAGMAILSLLLKPFSCCLVYHMHRERGGELPLRPDFFGPSQEHSAYQTIDSSSDAAADPFASLENKGQAVPRGY.

The Extracellular segment spans residues 1–26; it reads MELPAVNLKVILLVHWLLTTWGCLVF. Residues 27-47 form a helical membrane-spanning segment; it reads SSSYAWGNFTILALGVWAVAQ. The Cytoplasmic segment spans residues 48-53; it reads RDSIDA. The helical transmembrane segment at 54 to 74 threads the bilayer; sequence IGMFLGGLVATIFLDIIYISI. Residues 75–86 are Extracellular-facing; that stretch reads FYSSVATGDTGR. The helical transmembrane segment at 87-107 threads the bilayer; it reads FGAGMAILSLLLKPFSCCLVY. At 108 to 161 the chain is on the cytoplasmic side; the sequence is HMHRERGGELPLRPDFFGPSQEHSAYQTIDSSSDAAADPFASLENKGQAVPRGY. Residues 110–122 form an interaction with AGTR1 region; that stretch reads HRERGGELPLRPD. A Phosphoserine modification is found at serine 127. Threonine 135 is subject to Phosphothreonine. Phosphoserine is present on serine 138.

As to quaternary structure, interacts with RACK1, and with the C-terminal region of AGTR1. Ubiquitous but more abundant in kidney, testis and heart.

Its subcellular location is the endoplasmic reticulum membrane. It is found in the golgi apparatus membrane. The protein localises to the cytoplasmic vesicle membrane. Functionally, appears to be a negative regulator of type-1 angiotensin II receptor-mediated signaling by regulating receptor internalization as well as mechanism of receptor desensitization such as phosphorylation. Also induces a decrease in angiotensin II-stimulated transcriptional activity. May play a role of negative regulator in cardiomyocyte hypertrophy induced by angiotensin II through an inhibition of p38 mitogen-activated protein kinase pathway. The polypeptide is Type-1 angiotensin II receptor-associated protein (Agtrap) (Mus musculus (Mouse)).